The following is a 211-amino-acid chain: Uridine kinase (211 aa).

Residue 13–20 coordinates ATP; the sequence is GGSGSGKT.

Belongs to the uridine kinase family.

It localises to the cytoplasm. It carries out the reaction uridine + ATP = UMP + ADP + H(+). The catalysed reaction is cytidine + ATP = CMP + ADP + H(+). It functions in the pathway pyrimidine metabolism; CTP biosynthesis via salvage pathway; CTP from cytidine: step 1/3. It participates in pyrimidine metabolism; UMP biosynthesis via salvage pathway; UMP from uridine: step 1/1. The sequence is that of Uridine kinase from Lactobacillus johnsonii (strain CNCM I-12250 / La1 / NCC 533).